The chain runs to 311 residues: MTKLIFMGTPDFSATVLKGLLTDDRYEILAVVTQPDRAVGRKKVIQETPVKQAAKEAGLSIYQPEKLSGSPEMEDLMKLGADGIVTAAFGQFLPSKLLDSMDFAVNVHASLLPRHRGGAPIHYALIQGDEEAGVTIMEMVKEMDAGDMISRRSIPITDEDNVGTLFEKLALVGRDLLLDTLPAYIAGDIKPEPQDTSQVTFSPNIKSEEEKLNWNKTNRQLFNQIRGMNPWPVAHTFLKGDRFKIYEALPVEGQGNPGEILSIGKKELIVATAEGALSLKQVQPAGKPKMDIASFLNGVGRTLTVGERFGD.

110–113 (SLLP) is a binding site for (6S)-5,6,7,8-tetrahydrofolate.

This sequence belongs to the Fmt family.

The enzyme catalyses L-methionyl-tRNA(fMet) + (6R)-10-formyltetrahydrofolate = N-formyl-L-methionyl-tRNA(fMet) + (6S)-5,6,7,8-tetrahydrofolate + H(+). In terms of biological role, attaches a formyl group to the free amino group of methionyl-tRNA(fMet). The formyl group appears to play a dual role in the initiator identity of N-formylmethionyl-tRNA by promoting its recognition by IF2 and preventing the misappropriation of this tRNA by the elongation apparatus. This Streptococcus pneumoniae serotype 2 (strain D39 / NCTC 7466) protein is Methionyl-tRNA formyltransferase.